The sequence spans 101 residues: Small ribosomal subunit protein uS14 (101 aa).

This sequence belongs to the universal ribosomal protein uS14 family. As to quaternary structure, part of the 30S ribosomal subunit. Contacts proteins S3 and S10.

Binds 16S rRNA, required for the assembly of 30S particles and may also be responsible for determining the conformation of the 16S rRNA at the A site. This is Small ribosomal subunit protein uS14 from Paraburkholderia phytofirmans (strain DSM 17436 / LMG 22146 / PsJN) (Burkholderia phytofirmans).